Reading from the N-terminus, the 242-residue chain is GATA zinc finger domain-containing protein 1 (242 aa).

The segment at 9–33 adopts a GATA-type zinc-finger fold; that stretch reads CAVCKTQSSSMWKKGNQGEILCNGC. The interval 44 to 85 is disordered; sequence GASASSTIQQNNGGGKQSKQEIHRRSARLRSTKYKAPASEKK. Residues 45–54 are compositionally biased toward low complexity; it reads ASASSTIQQN.

The protein localises to the nucleus. Component of some chromatin complex recruited to chromatin sites methylated 'Lys-4' of histone H3 (H3K4me), with a preference for trimethylated form (H3K4me3). The sequence is that of GATA zinc finger domain-containing protein 1 (gatad1) from Danio rerio (Zebrafish).